Reading from the N-terminus, the 481-residue chain is UDP-glycosyltransferase 72E3 (481 aa).

Catalysis depends on histidine 18, which acts as the Proton acceptor. Position 18 (histidine 18) interacts with an anthocyanidin. Catalysis depends on aspartate 111, which acts as the Charge relay. UDP-alpha-D-glucose-binding residues include alanine 346, glutamine 348, histidine 363, tryptophan 366, serine 368, and glutamate 371. Alanine 386 contacts an anthocyanidin. Glutamate 387 and glutamine 388 together coordinate UDP-alpha-D-glucose.

The protein belongs to the UDP-glycosyltransferase family. In terms of tissue distribution, expressed in seedlings and roots, and at lower levels in flowers and siliques.

The enzyme catalyses (E)-4-coumarate + UDP-alpha-D-glucose = 4-O-(beta-D-glucosyl)-trans-4-coumarate + UDP + H(+). It catalyses the reaction (E)-sinapyl alcohol + UDP-alpha-D-glucose = 4-O-(beta-D-glucosyl)-trans-4-sinapoyl alcohol + UDP + H(+). It carries out the reaction (E)-coniferol + UDP-alpha-D-glucose = 4-O-(beta-D-glucosyl)-(E)-coniferol + UDP + H(+). The catalysed reaction is (E)-sinapate + UDP-alpha-D-glucose = 4-O-(beta-D-glucosyl)-trans-sinapate + UDP + H(+). The enzyme catalyses (E)-coniferaldehyde + UDP-alpha-D-glucose = 4-O-(beta-D-glucosyl)-4-(E)-coniferyl aldehyde + UDP + H(+). It catalyses the reaction (E)-sinapaldehyde + UDP-alpha-D-glucose = 4-O-(beta-D-glucosyl)-4-trans-sinapoyl aldehyde + UDP + H(+). Functionally, involved in the O-glucosylation of monolignols (alcohol monomers of lignin). Glucosylates coniferyl alcohol to form coniferyl alcohol 4-O-glucoside. Glucosylates sinapyl alcohol to form sinapyl alcohol 4-O-glucoside. Possesses low activity with sinapate as substrate. In Arabidopsis thaliana (Mouse-ear cress), this protein is UDP-glycosyltransferase 72E3.